Here is a 331-residue protein sequence, read N- to C-terminus: Ferredoxin--NADP reductase (331 aa).

Residues E34, Q42, Y47, V87, F121, D285, and T325 each contribute to the FAD site.

Belongs to the ferredoxin--NADP reductase type 2 family. Homodimer. The cofactor is FAD.

The catalysed reaction is 2 reduced [2Fe-2S]-[ferredoxin] + NADP(+) + H(+) = 2 oxidized [2Fe-2S]-[ferredoxin] + NADPH. The chain is Ferredoxin--NADP reductase from Lactiplantibacillus plantarum (strain ATCC BAA-793 / NCIMB 8826 / WCFS1) (Lactobacillus plantarum).